The chain runs to 908 residues: Protein translocase subunit SecA (908 aa).

ATP-binding positions include Gln87, 105–109, and Asp513; that span reads GEGKT. The segment covering 852 to 863 has biased composition (low complexity); sequence ARRAQAQHATAE. The interval 852–908 is disordered; that stretch reads ARRAQAQHATAENQLADDEAEAASPQTVVRDERKVGRNEPCPCGSGKKYKQCHGKID. Residues Cys892, Cys894, Cys903, and His904 each contribute to the Zn(2+) site. Residues 898–908 show a composition bias toward basic residues; that stretch reads KKYKQCHGKID.

This sequence belongs to the SecA family. In terms of assembly, monomer and homodimer. Part of the essential Sec protein translocation apparatus which comprises SecA, SecYEG and auxiliary proteins SecDF-YajC and YidC. It depends on Zn(2+) as a cofactor.

The protein resides in the cell inner membrane. It is found in the cytoplasm. It carries out the reaction ATP + H2O + cellular proteinSide 1 = ADP + phosphate + cellular proteinSide 2.. Functionally, part of the Sec protein translocase complex. Interacts with the SecYEG preprotein conducting channel. Has a central role in coupling the hydrolysis of ATP to the transfer of proteins into and across the cell membrane, serving both as a receptor for the preprotein-SecB complex and as an ATP-driven molecular motor driving the stepwise translocation of polypeptide chains across the membrane. The polypeptide is Protein translocase subunit SecA (Vibrio atlanticus (strain LGP32) (Vibrio splendidus (strain Mel32))).